Reading from the N-terminus, the 81-residue chain is Delta-conotoxin PVIA (81 aa).

An N-terminal signal peptide occupies residues 1 to 22 (MKLTCVMIVAVLFLTAWTFVTA). A propeptide spanning residues 23–49 (DDSKNGLENHFWKARDEMKNREASKLD) is cleaved from the precursor. 3 cysteine pairs are disulfide-bonded: Cys54-Cys69, Cys61-Cys73, and Cys68-Cys78. 4-hydroxyproline occurs at positions 57 and 65. Gly80 is subject to Glycine amide; in form delta-conotoxin PVIA.

In terms of processing, the difference between delta-conotoxin PVIA and [deamido]-delta-conotoxin PVIA lies in the state of amidation of Gly-80. Expressed by the venom duct.

Its subcellular location is the secreted. Delta-conotoxins bind to site 6 of voltage-gated sodium channels (Nav) and inhibit the inactivation process. This toxin shows weak effects on rNav1.2/SCN2A (EC(50)=2.9 uM), rNav1.4/SCN4A (EC(50)=5.2 uM), hNav1.7/SCN9A (EC(50)=1.9 uM) and rNav1.7/SCN9A (EC(50)=6.4 uM). In vivo, this toxin shows different effects. In mice, injection of this toxin causes hyperactivity, rapid running, limb extension, and death. In fish, the peptide elicites spurts of rapid swimming, with twisted motions, quivering fins and the lockjaw extended mouth syndrome. Rigid paralysis and death are observed at higher doses. In mollusks, this peptide is inactive. Injection of this peptide together with the kappa-conotoxin PVIIA causes the sudden tetanus of prey (STOP) syndrome, which is a single, lethal 'fin-pop' in envenomed fish. The chain is Delta-conotoxin PVIA from Conus purpurascens (Purple cone).